Here is an 872-residue protein sequence, read N- to C-terminus: Leucine--tRNA ligase (872 aa).

The short motif at P42–H52 is the 'HIGH' region element. Residues T634–S638 carry the 'KMSKS' region motif. K637 contributes to the ATP binding site.

This sequence belongs to the class-I aminoacyl-tRNA synthetase family.

The protein resides in the cytoplasm. It carries out the reaction tRNA(Leu) + L-leucine + ATP = L-leucyl-tRNA(Leu) + AMP + diphosphate. This chain is Leucine--tRNA ligase, found in Nostoc sp. (strain PCC 7120 / SAG 25.82 / UTEX 2576).